A 594-amino-acid chain; its full sequence is U3 small nucleolar RNA-associated protein 18 (594 aa).

Disordered stretches follow at residues Glu48–Ser128 and Lys176–Val200. 3 stretches are compositionally biased toward acidic residues: residues Gln49–Gln72, Thr102–Ser128, and Asp180–Gly196. An interaction with UTP21 region spans residues Asp101–Glu190. Phosphoserine occurs at positions 182 and 184. WD repeat units follow at residues Pro246–Val285, Leu290–Ser334, Gly463–Thr504, Gln513–Asn554, and Thr560–His593.

It belongs to the WD repeat UTP18 family. In terms of assembly, interacts with snoRNA U3. Interacts with MPP10, UTP21 and UTP25. Component of the ribosomal small subunit (SSU) processome composed of at least 40 protein subunits and snoRNA U3.

It localises to the nucleus. Its subcellular location is the nucleolus. Involved in nucleolar processing of pre-18S ribosomal RNA and ribosome assembly. The chain is U3 small nucleolar RNA-associated protein 18 (UTP18) from Saccharomyces cerevisiae (strain ATCC 204508 / S288c) (Baker's yeast).